The primary structure comprises 310 residues: Olfactory receptor 5P56 (310 aa).

Residues 1-25 (MEAQNHTTVKEFILLGLTENSTLRV) are Extracellular-facing. N-linked (GlcNAc...) asparagine glycosylation is found at N5 and N20. Residues 26 to 46 (ILFMIFLGIYTVTLVGNFSII) form a helical membrane-spanning segment. Topologically, residues 47–54 (SLIRSCPQ) are cytoplasmic. Residues 55–75 (LHTPMYLFLSHLALVDIGFST) traverse the membrane as a helical segment. At 76–99 (SITPIMLTGFLGHTVTLSVAACVA) the chain is on the extracellular side. A disulfide bond links C97 and C189. Residues 100-120 (QFCIAVTFGTVECFLLAVMAY) form a helical membrane-spanning segment. The Cytoplasmic segment spans residues 121–133 (DRYVAICSPLLYS). A helical transmembrane segment spans residues 134 to 154 (THMSPRICFLLVGASYVGGCV). Residues 155-196 (NSGTFTSCLLILSFCGPNQIDHFFCDFPAVLKLSCSDVSIIG) lie on the Extracellular side of the membrane. The chain crosses the membrane as a helical span at residues 197–217 (IIPSISAGSIIVITVFVIAVS). Over 218–237 (YTYILITILNMRSTEGRHKA) the chain is Cytoplasmic. A helical transmembrane segment spans residues 238 to 258 (FSTCTSHLTAVTLYYGTITFI). The Extracellular portion of the chain corresponds to 259-271 (YVMPKSNYSTAQN). N265 carries an N-linked (GlcNAc...) asparagine glycan. Residues 272–292 (KILSVFYTVVIPMLNPLIYSL) traverse the membrane as a helical segment. The Cytoplasmic segment spans residues 293 to 310 (RNRDVKEALRKAIIRIFP).

Belongs to the G-protein coupled receptor 1 family.

Its subcellular location is the cell membrane. Functionally, potential odorant receptor. In Mus musculus (Mouse), this protein is Olfactory receptor 5P56.